The sequence spans 602 residues: DNA mismatch repair protein MutL (602 aa).

It belongs to the DNA mismatch repair MutL/HexB family.

In terms of biological role, this protein is involved in the repair of mismatches in DNA. It is required for dam-dependent methyl-directed DNA mismatch repair. May act as a 'molecular matchmaker', a protein that promotes the formation of a stable complex between two or more DNA-binding proteins in an ATP-dependent manner without itself being part of a final effector complex. In Geotalea uraniireducens (strain Rf4) (Geobacter uraniireducens), this protein is DNA mismatch repair protein MutL.